A 221-amino-acid polypeptide reads, in one-letter code: 7-cyano-7-deazaguanine synthase (221 aa).

10–20 (FSGGQDSTTCL) provides a ligand contact to ATP. Zn(2+) is bound by residues cysteine 186, cysteine 195, cysteine 198, and cysteine 201.

This sequence belongs to the QueC family. In terms of assembly, homodimer. The cofactor is Zn(2+).

The catalysed reaction is 7-carboxy-7-deazaguanine + NH4(+) + ATP = 7-cyano-7-deazaguanine + ADP + phosphate + H2O + H(+). Its pathway is purine metabolism; 7-cyano-7-deazaguanine biosynthesis. In terms of biological role, catalyzes the ATP-dependent conversion of 7-carboxy-7-deazaguanine (CDG) to 7-cyano-7-deazaguanine (preQ(0)). In Geobacillus thermodenitrificans (strain NG80-2), this protein is 7-cyano-7-deazaguanine synthase.